Here is a 285-residue protein sequence, read N- to C-terminus: Eukaryotic translation initiation factor 3 subunit F-2 (285 aa).

In terms of domain architecture, MPN spans 11–145 (VFIKPLVLFQ…TRLYCAVEIG (135 aa)).

This sequence belongs to the eIF-3 subunit F family. Component of the eukaryotic translation initiation factor 3 (eIF-3) complex. The eIF-3 complex interacts with pix.

The protein resides in the cytoplasm. In terms of biological role, component of the eukaryotic translation initiation factor 3 (eIF-3) complex, which is involved in protein synthesis of a specialized repertoire of mRNAs and, together with other initiation factors, stimulates binding of mRNA and methionyl-tRNAi to the 40S ribosome. The eIF-3 complex specifically targets and initiates translation of a subset of mRNAs involved in cell proliferation. This Drosophila yakuba (Fruit fly) protein is Eukaryotic translation initiation factor 3 subunit F-2.